Here is a 107-residue protein sequence, read N- to C-terminus: UPF0060 membrane protein Atu1058 (107 aa).

A run of 4 helical transmembrane segments spans residues 5–25 (LIYV…WAWL), 32–52 (WILL…TLVA), 59–79 (AYAA…WGVE), and 85–105 (RWDI…LFGP).

The protein belongs to the UPF0060 family.

It localises to the cell inner membrane. The sequence is that of UPF0060 membrane protein Atu1058 from Agrobacterium fabrum (strain C58 / ATCC 33970) (Agrobacterium tumefaciens (strain C58)).